A 176-amino-acid chain; its full sequence is Large ribosomal subunit protein uL22 (176 aa).

Residues 113-176 form a disordered region; the sequence is VVESRPSKDQ…ETSEAKGGSD (64 aa). Residues 136–152 show a composition bias toward low complexity; the sequence is SKAAATAPAKKSSASKA. Basic and acidic residues predominate over residues 159 to 176; it reads TKAESKTSETSEAKGGSD.

This sequence belongs to the universal ribosomal protein uL22 family. In terms of assembly, part of the 50S ribosomal subunit.

In terms of biological role, this protein binds specifically to 23S rRNA; its binding is stimulated by other ribosomal proteins, e.g. L4, L17, and L20. It is important during the early stages of 50S assembly. It makes multiple contacts with different domains of the 23S rRNA in the assembled 50S subunit and ribosome. The globular domain of the protein is located near the polypeptide exit tunnel on the outside of the subunit, while an extended beta-hairpin is found that lines the wall of the exit tunnel in the center of the 70S ribosome. This chain is Large ribosomal subunit protein uL22, found in Mycobacterium marinum (strain ATCC BAA-535 / M).